A 326-amino-acid chain; its full sequence is uncharacterized protein (326 aa).

2 helical membrane-spanning segments follow: residues 9–29 (WVVLPLLRYPLLVALVLRWSL) and 33–53 (ISICLTIYTLLINAFLIANSY). The NADP(+) site is built by aspartate 120, asparagine 148, tyrosine 214, lysine 218, and threonine 252. Tyrosine 214 serves as the catalytic Proton acceptor. The Lowers pKa of active site Tyr role is filled by lysine 218.

Belongs to the short-chain dehydrogenases/reductases (SDR) family.

The protein localises to the mitochondrion membrane. Functionally, involved in the resistance to DNA-damaging agents. This is an uncharacterized protein from Saccharomyces cerevisiae (strain ATCC 204508 / S288c) (Baker's yeast).